The chain runs to 410 residues: Multidrug transporter MdfA (410 aa).

Residues 1–15 are Cytoplasmic-facing; sequence MQNKLASGARLGRQA. A helical membrane pass occupies residues 16–36; sequence LLFPLCLVLYEFSTYIGNDMI. Topologically, residues 37–52 are periplasmic; that stretch reads QPGMLAVVEQYQAGID. The chain crosses the membrane as a helical span at residues 53-73; that stretch reads WVPTSMTAYLAGGMFLQWLLG. Residues 74–82 lie on the Cytoplasmic side of the membrane; that stretch reads PLSDRIGRR. Residues 83 to 103 traverse the membrane as a helical segment; it reads PVMLAGVVWFIVTCLAILLAQ. The Periplasmic segment spans residues 104–109; that stretch reads NIEQFT. Residues 110–130 traverse the membrane as a helical segment; it reads LLRFLQGISLCFIGAVGYAAI. Topologically, residues 131–144 are cytoplasmic; that stretch reads QESFEEAVCIKITA. The chain crosses the membrane as a helical span at residues 145-165; it reads LMANVALIAPLLGPLVGAAWI. Position 166 (His-166) is a topological domain, periplasmic. Residues 167-187 form a helical membrane-spanning segment; sequence VLPWEGMFVLFAALAAISFFG. Residues 188–226 lie on the Cytoplasmic side of the membrane; that stretch reads LQRAMPETATRIGEKLSLKELGRDYKLVLKNGRFVAGAL. Residues 227 to 247 traverse the membrane as a helical segment; it reads ALGFVSLPLLAWIAQSPIIII. Over 248 to 255 the chain is Periplasmic; that stretch reads TGEQLSSY. A helical membrane pass occupies residues 256–276; that stretch reads EYGLLQVPIFGALIAGNLLLA. At 277–287 the chain is on the cytoplasmic side; that stretch reads RLTSRRTVRSL. A helical transmembrane segment spans residues 288 to 308; that stretch reads IIMGGWPIMIGLLVAAAATVI. At 309–314 the chain is on the periplasmic side; that stretch reads SSHAYL. A helical transmembrane segment spans residues 315–335; it reads WMTAGLSIYAFGIGLANAGLV. Residues 336-346 lie on the Cytoplasmic side of the membrane; sequence RLTLFASDMSK. Residues 347 to 367 traverse the membrane as a helical segment; that stretch reads GTVSAAMGMLQMLIFTVGIEI. The Periplasmic portion of the chain corresponds to 368-378; that stretch reads SKHAWLNGGNG. A helical transmembrane segment spans residues 379–399; it reads LFNLFNLVNGILWLSLMVIFL. Residues 400-410 lie on the Cytoplasmic side of the membrane; the sequence is KDKQMGNSHEG.

Belongs to the major facilitator superfamily. MdfA family. Monomer.

It localises to the cell inner membrane. Its function is as follows. Efflux pump driven by the proton motive force. Confers resistance to a broad spectrum of chemically unrelated drugs. The sequence is that of Multidrug transporter MdfA (mdfA) from Escherichia coli O6:H1 (strain CFT073 / ATCC 700928 / UPEC).